A 342-amino-acid polypeptide reads, in one-letter code: 4-hydroxythreonine-4-phosphate dehydrogenase (342 aa).

Substrate contacts are provided by histidine 139 and threonine 140. A divalent metal cation contacts are provided by histidine 174, histidine 219, and histidine 274. Substrate-binding residues include lysine 282, asparagine 291, and arginine 300.

It belongs to the PdxA family. Homodimer. Zn(2+) is required as a cofactor. Mg(2+) serves as cofactor. Requires Co(2+) as cofactor.

Its subcellular location is the cytoplasm. It carries out the reaction 4-(phosphooxy)-L-threonine + NAD(+) = 3-amino-2-oxopropyl phosphate + CO2 + NADH. It functions in the pathway cofactor biosynthesis; pyridoxine 5'-phosphate biosynthesis; pyridoxine 5'-phosphate from D-erythrose 4-phosphate: step 4/5. Functionally, catalyzes the NAD(P)-dependent oxidation of 4-(phosphooxy)-L-threonine (HTP) into 2-amino-3-oxo-4-(phosphooxy)butyric acid which spontaneously decarboxylates to form 3-amino-2-oxopropyl phosphate (AHAP). This chain is 4-hydroxythreonine-4-phosphate dehydrogenase, found in Mesorhizobium japonicum (strain LMG 29417 / CECT 9101 / MAFF 303099) (Mesorhizobium loti (strain MAFF 303099)).